Consider the following 158-residue polypeptide: C-type lectin lectoxin-Enh4 (158 aa).

The first 23 residues, 1–23, serve as a signal peptide directing secretion; the sequence is MGQFTVVSLGLLAMFLSLSGAKG. Cystine bridges form between cysteine 26-cysteine 37, cysteine 54-cysteine 154, and cysteine 129-cysteine 146. Positions 33-155 constitute a C-type lectin domain; sequence RNGVCNKLFP…CASLHPFICQ (123 aa). A Mannose-binding motif is present at residues 119–121; sequence EPN. Glutamate 127, asparagine 142, and aspartate 143 together coordinate Ca(2+).

This sequence belongs to the true venom lectin family. In terms of tissue distribution, expressed by the venom gland.

The protein localises to the secreted. Its function is as follows. Mannose-binding lectin which recognizes specific carbohydrate structures and agglutinates a variety of animal cells by binding to cell-surface glycoproteins and glycolipids. May be a calcium-dependent lectin. In Pseudoferania polylepis (Macleay's water snake), this protein is C-type lectin lectoxin-Enh4.